The sequence spans 136 residues: Large ribosomal subunit protein uL16 (136 aa).

Belongs to the universal ribosomal protein uL16 family. Part of the 50S ribosomal subunit.

Binds 23S rRNA and is also seen to make contacts with the A and possibly P site tRNAs. This is Large ribosomal subunit protein uL16 from Serratia proteamaculans (strain 568).